The sequence spans 1129 residues: ATP-dependent DNA helicase mph1 (1129 aa).

3 disordered regions span residues 1 to 101, 124 to 222, and 236 to 306; these read MTGS…FEDA, TQLT…QNEG, and DAFD…TQHK. A compositionally biased stretch (basic and acidic residues) spans 45 to 63; that stretch reads DGTASDVRRRPSENRESQR. Polar residues-rich tracts occupy residues 203–222 and 242–285; these read NTKAPTHQPITRSPTVQNEG and ISLS…QTDQ. Residues 297 to 306 are compositionally biased toward basic and acidic residues; that stretch reads QKDEPPTQHK. Residues 331–499 enclose the Helicase ATP-binding domain; sequence IAQKGLFHNL…AVIDGLDIAR (169 aa). ATP is bound at residue 344–351; the sequence is LPTGLGKT. The short motif at 447 to 450 is the DEAH box element; sequence DEAH. Residues 674–843 form the Helicase C-terminal domain; the sequence is VLNHFMDAGE…GSRFTFHDDI (170 aa). 3 disordered regions span residues 863-930, 1018-1060, and 1072-1129; these read IPDE…VEIP, RQGD…STED, and SVVK…DSDD. 2 stretches are compositionally biased toward basic residues: residues 877 to 889 and 1028 to 1044; these read RRGRAPKRPPKKF and SPRHERRRRLSKTKPRY. The span at 1077 to 1086 shows a compositional bias: polar residues; the sequence is QKQQPFYSSQ.

Belongs to the DEAD box helicase family. DEAH subfamily. FANCM sub-subfamily. Interacts with the MHF histone-fold complex to form the FANCM-MHF complex.

The protein resides in the nucleus. The catalysed reaction is ATP + H2O = ADP + phosphate + H(+). Functionally, ATP-dependent DNA helicase involved in DNA damage repair by homologous recombination and in genome maintenance. Capable of unwinding D-loops. Plays a role in limiting crossover recombinants during mitotic DNA double-strand break (DSB) repair. Component of a FANCM-MHF complex which promotes gene conversion at blocked replication forks, probably by reversal of the stalled fork. The polypeptide is ATP-dependent DNA helicase mph1 (Aspergillus oryzae (strain ATCC 42149 / RIB 40) (Yellow koji mold)).